A 128-amino-acid polypeptide reads, in one-letter code: Holo-[acyl-carrier-protein] synthase (128 aa).

Residues D8 and E60 each coordinate Mg(2+).

The protein belongs to the P-Pant transferase superfamily. AcpS family. It depends on Mg(2+) as a cofactor.

It localises to the cytoplasm. It carries out the reaction apo-[ACP] + CoA = holo-[ACP] + adenosine 3',5'-bisphosphate + H(+). In terms of biological role, transfers the 4'-phosphopantetheine moiety from coenzyme A to a Ser of acyl-carrier-protein. This is Holo-[acyl-carrier-protein] synthase from Anaeromyxobacter dehalogenans (strain 2CP-C).